We begin with the raw amino-acid sequence, 566 residues long: Autophagy-related protein 22-1 (566 aa).

Residues 38–58 (YPIAAEVFAVVAVGAFLPVIL) traverse the membrane as a helical segment. Asn-103 is a glycosylation site (N-linked (GlcNAc...) asparagine). Helical transmembrane passes span 110 to 130 (SFAMYTFSAAVIVQAVTLVCF), 146 to 168 (AFAYTGSVASALFIFISPTVYFL), and 179 to 199 (SLGCSFVLLNAFLPLLVANHA). Asn-200 carries N-linked (GlcNAc...) asparagine glycosylation. The next 8 membrane-spanning stretches (helical) occupy residues 242–262 (GYGYMAAVFVQVISILILWLF), 278–298 (VILLLVGMWWAALTTPTLLWL), 351–371 (FLISWFLLSDAVATISGTAVL), 382–402 (IAIALLSITSIGSGIIGAFAW), 416–436 (ILLCCVAGMEMIPLYGLLGFI), 451–471 (WEIYPVAVLHGIVMGGVSSYA), 488–510 (FALYAVTDKGSSAFGPALVGWLV), and 519–539 (AFIFLAVLVVLPAPLLWMLDV). A disordered region spans residues 547–566 (KAMADGEGRGRGTYERVREE).

This sequence belongs to the ATG22 family.

The protein resides in the vacuole membrane. Its function is as follows. Vacuolar effluxer which mediate the efflux of amino acids resulting from autophagic degradation. The release of autophagic amino acids allows the maintenance of protein synthesis and viability during nitrogen starvation. This chain is Autophagy-related protein 22-1 (ATG22-1), found in Phaeosphaeria nodorum (strain SN15 / ATCC MYA-4574 / FGSC 10173) (Glume blotch fungus).